Consider the following 248-residue polypeptide: MELTWHGHSTWHVVVDDTELLIDPYFDNPKTDVDPEELDPDYLLLTHGHSDHIGDVDRYEGATVVATPELTGYIQENFGHENAVGGMGMNIGGTVECGDAWVTMVRADHSNGIDTGYGTSAGMPAGFVIGDKKPTQESDPDCTTFYHAGDTGLMSEMVDVIAPYLEPDAAALPTGDHFTMGPAGAGIAADWVGADVVFPMHYDTFQPIEIDTREFVNEVKAAGAAAEPVVLEGDETYVLENEFGSDGD.

Belongs to the UPF0173 family.

The chain is UPF0173 metal-dependent hydrolase Hlac_1347 from Halorubrum lacusprofundi (strain ATCC 49239 / DSM 5036 / JCM 8891 / ACAM 34).